The primary structure comprises 314 residues: Ribose-phosphate pyrophosphokinase (314 aa).

Residues 37 to 39 (DGE) and 96 to 97 (RQ) each bind ATP. Mg(2+) is bound by residues H131 and D170. Residue K194 is part of the active site. D-ribose 5-phosphate-binding positions include R196, D220, and 224–228 (DTGGT).

The protein belongs to the ribose-phosphate pyrophosphokinase family. Class I subfamily. As to quaternary structure, homohexamer. Mg(2+) is required as a cofactor.

The protein resides in the cytoplasm. It carries out the reaction D-ribose 5-phosphate + ATP = 5-phospho-alpha-D-ribose 1-diphosphate + AMP + H(+). It functions in the pathway metabolic intermediate biosynthesis; 5-phospho-alpha-D-ribose 1-diphosphate biosynthesis; 5-phospho-alpha-D-ribose 1-diphosphate from D-ribose 5-phosphate (route I): step 1/1. In terms of biological role, involved in the biosynthesis of the central metabolite phospho-alpha-D-ribosyl-1-pyrophosphate (PRPP) via the transfer of pyrophosphoryl group from ATP to 1-hydroxyl of ribose-5-phosphate (Rib-5-P). The protein is Ribose-phosphate pyrophosphokinase of Vibrio vulnificus (strain CMCP6).